Here is a 409-residue protein sequence, read N- to C-terminus: NADH-ubiquinone oxidoreductase chain 4 (409 aa).

13 helical membrane passes run 10 to 30 (LWLF…FLIF), 44 to 64 (SYSF…IVIS), 76 to 96 (ILVF…LYMF), 98 to 118 (ELSM…IEKI), 120 to 140 (SSYY…FVYF), 160 to 180 (FFIL…HLWL), 194 to 214 (LLAG…LGSL), 221 to 241 (VWIL…VFQS), 245 to 265 (ALAA…LVFI), 271 to 291 (ISSV…FYLI), 305 to 325 (FMSS…VVFL), 353 to 373 (MFVM…FLIT), and 389 to 409 (VGFS…SVFY).

The protein belongs to the complex I subunit 4 family.

Its subcellular location is the mitochondrion membrane. It carries out the reaction a ubiquinone + NADH + 5 H(+)(in) = a ubiquinol + NAD(+) + 4 H(+)(out). Its function is as follows. Core subunit of the mitochondrial membrane respiratory chain NADH dehydrogenase (Complex I) that is believed to belong to the minimal assembly required for catalysis. Complex I functions in the transfer of electrons from NADH to the respiratory chain. The immediate electron acceptor for the enzyme is believed to be ubiquinone. This Caenorhabditis elegans protein is NADH-ubiquinone oxidoreductase chain 4.